The sequence spans 389 residues: Homoserine O-acetyltransferase (389 aa).

The AB hydrolase-1 domain occupies 63 to 371 (NAVLVLHALT…SSDYGHDGFL (309 aa)). Catalysis depends on S168, which acts as the Nucleophile. R240 lines the substrate pocket. Active-site residues include D334 and H367. Position 368 (D368) interacts with substrate.

This sequence belongs to the AB hydrolase superfamily. MetX family. As to quaternary structure, homodimer.

The protein localises to the cytoplasm. The catalysed reaction is L-homoserine + acetyl-CoA = O-acetyl-L-homoserine + CoA. Its pathway is amino-acid biosynthesis; L-methionine biosynthesis via de novo pathway; O-acetyl-L-homoserine from L-homoserine: step 1/1. Its function is as follows. Transfers an acetyl group from acetyl-CoA to L-homoserine, forming acetyl-L-homoserine. The polypeptide is Homoserine O-acetyltransferase (Clavibacter michiganensis subsp. michiganensis (strain NCPPB 382)).